The following is a 1003-amino-acid chain: NACHT, LRR and PYD domains-containing protein 9B (1003 aa).

The Pyrin domain occupies 1 to 91; it reads MAGSSGYGLL…SIMAQKKKRH (91 aa). In terms of domain architecture, NACHT spans 143–465; the sequence is VTAIVAGTTG…QDKDICVPVI (323 aa). Position 149 to 156 (149 to 156) interacts with ATP; sequence GTTGEGKT. 7 LRR repeats span residues 749 to 770, 778 to 799, 806 to 826, 835 to 856, 863 to 883, 892 to 913, and 920 to 940; these read KVKHLSLVENPLKNKGVMSLCE, VLQSLMLSYCCLTFIACGHLYE, HLSLLDLGSNFLEDTGVNLLC, TLKELWLPGCFLTSQCCEEISA, NLKTLKLGNNNIQDTGVRQLC, NLECLGLDLCEFTSDCCKDLAL, and TLNSLNLDWKTLDHSGLVVLC.

As to quaternary structure, sensor component of NLRP9 inflammasomes. Inflammasomes are supramolecular complexes that assemble in the cytosol in response to pathogens, such as rotavirus, but not encephalomyocarditis virus (EMCV), and play critical roles in innate immunity and inflammation. The core of NLRP9 inflammasomes consists of a signal sensor component (NLRP9), an adapter (ASC/PYCARD), which recruits an effector pro-inflammatory caspase (CASP1). Within the complex, NLRP9 and PYCARD interact via their respective DAPIN/pyrin domains. This interaction initiates speck formation (nucleation) which greatly enhances further addition of soluble PYCARD molecules to the speck in a prion-like polymerization process. Clustered PYCARD nucleates the formation of CASP1 filaments through the interaction of their respective CARD domains, acting as a platform for CASP1 polymerization. CASP1 filament formation increases local enzyme concentration, resulting in trans-autocleavage and activation. Active CASP1 then processes IL1B and IL18 precursors, leading to the release of mature cytokines in the extracellular milieu and inflammatory response. Interacts with DHX9 upon rotavirus infection; this interaction may trigger inflammasome activation and inflammatory response. As to expression, predominantly expressed in the intestine, including proximal and distal colon, cecum, ileum, jejunum and duodenum (at protein level). In the ileum, expressed in epithelial cells. Also expressed in oocytes at all follicular stages and in preimplantation embryos (at protein level). Although expression decreases in preimplantation embryos, it is still detectable in blastocyts.

The protein localises to the cytoplasm. Its subcellular location is the inflammasome. Its function is as follows. As the sensor component of the NLRP9 inflammasome, plays a crucial role in innate immunity and inflammation. In response to pathogens, including rotavirus, initiates the formation of the inflammasome polymeric complex, made of NLRP9, PYCARD and CASP1. Recruitment of proCASP1 to the inflammasome promotes its activation and CASP1-catalyzed IL1B and IL18 maturation and release in the extracellular milieu. The active cytokines stimulate inflammatory responses. Inflammasomes can also induce pyroptosis, an inflammatory form of programmed cell death. NLRP9 inflammasome activation may be initiated by DHX9 interaction with viral double-stranded RNA (dsRNA), preferentially to short dsRNA segments. This is NACHT, LRR and PYD domains-containing protein 9B (Nlrp9b) from Mus musculus (Mouse).